A 692-amino-acid polypeptide reads, in one-letter code: Elongation factor G (692 aa).

One can recognise a tr-type G domain in the interval Asn-8–Thr-283. GTP is bound by residues Ala-17 to Thr-24, Asp-81 to His-85, and Asn-135 to Asp-138.

Belongs to the TRAFAC class translation factor GTPase superfamily. Classic translation factor GTPase family. EF-G/EF-2 subfamily.

The protein resides in the cytoplasm. In terms of biological role, catalyzes the GTP-dependent ribosomal translocation step during translation elongation. During this step, the ribosome changes from the pre-translocational (PRE) to the post-translocational (POST) state as the newly formed A-site-bound peptidyl-tRNA and P-site-bound deacylated tRNA move to the P and E sites, respectively. Catalyzes the coordinated movement of the two tRNA molecules, the mRNA and conformational changes in the ribosome. This is Elongation factor G from Helicobacter pylori (strain Shi470).